Reading from the N-terminus, the 86-residue chain is Anti-adapter protein IraP (86 aa).

Positions 1–36 (MKNLISELLLRLAQKEEESKELVAQVEALEIIVTAM) form a coiled coil.

Belongs to the IraP family. In terms of assembly, interacts with RssB.

Its subcellular location is the cytoplasm. Inhibits RpoS proteolysis by regulating RssB activity, thereby increasing the stability of the sigma stress factor RpoS especially during phosphate starvation, but also in stationary phase and during nitrogen starvation. Its effect on RpoS stability is due to its interaction with RssB, which probably blocks the interaction of RssB with RpoS, and the consequent delivery of the RssB-RpoS complex to the ClpXP protein degradation pathway. This chain is Anti-adapter protein IraP, found in Citrobacter koseri (strain ATCC BAA-895 / CDC 4225-83 / SGSC4696).